The primary structure comprises 193 residues: Protein TEX261 (193 aa).

5 consecutive transmembrane segments (helical) span residues 1-21 (MVGV…PPPA), 39-59 (SRII…LYVF), 67-87 (IGVG…FPFI), 94-114 (FILS…FFAE), and 122-142 (VLAY…VSLS).

This sequence belongs to the SVP26 family.

The protein resides in the membrane. The chain is Protein TEX261 (TEX261) from Bos taurus (Bovine).